The following is a 410-amino-acid chain: Na(+)/H(+) antiporter NhaS4 (410 aa).

Transmembrane regions (helical) follow at residues 7–27, 33–53, 69–89, 107–127, 135–155, 173–193, 199–219, 241–261, 291–311, 319–339, and 376–396; these read LLILANIIVIIGLARLIGLLF, PPVIGEIIAGIMLGPSLLGLL, FLYLLSEIGLIFYMFLVGLEL, VSIFFPFVLGIVLSFFVLYSL, FIPFALFIGAAMSITAFPVLA, LTCASVDDISAWCLLAIAIAV, IFGAFPTLLGIIVYTVFMVTL, LLTFIYIMVILSAMLTEWIGI, FVSTFLLPIFFAYSGLSTDLG, WAVCALVVAAAIAGKYCGVYV, and GVISPVIFTMFVIMAIITTII.

It belongs to the monovalent cation:proton antiporter 2 (CPA2) transporter (TC 2.A.37) family.

The protein resides in the membrane. In terms of biological role, na(+)/H(+) antiporter. The chain is Na(+)/H(+) antiporter NhaS4 (nhaS4) from Synechocystis sp. (strain ATCC 27184 / PCC 6803 / Kazusa).